Consider the following 406-residue polypeptide: Olfactomedin-like protein 3 (406 aa).

A signal peptide spans Met-1–Gly-21. Residues Gln-22–Asn-101 are a coiled coil. In terms of domain architecture, Olfactomedin-like spans Asp-134 to Lys-401. A disulfide bond links Cys-135 and Cys-328. Asn-248 is a glycosylation site (N-linked (GlcNAc...) asparagine).

Belongs to the OLFML3 family.

The protein resides in the secreted. Functionally, secreted scaffold protein that plays an essential role in dorsoventral patterning during early development. Stabilizes axial formation by restricting chordin (CHRD) activity on the dorsal side. Acts by facilitating the association between the tolloid proteases and their substrate chordin (CHRD), leading to enhance chordin (CHRD) degradation. May have matrix-related function involved in placental and embryonic development, or play a similar role in other physiological processes. The sequence is that of Olfactomedin-like protein 3 (OLFML3) from Bos taurus (Bovine).